The primary structure comprises 314 residues: Aspartate carbamoyltransferase catalytic subunit (314 aa).

Carbamoyl phosphate-binding residues include Arg58 and Thr59. Lys86 is an L-aspartate binding site. Carbamoyl phosphate is bound by residues Arg108, His136, and Gln139. Positions 169 and 223 each coordinate L-aspartate. Gly264 and Pro265 together coordinate carbamoyl phosphate.

Belongs to the aspartate/ornithine carbamoyltransferase superfamily. ATCase family. In terms of assembly, heterododecamer (2C3:3R2) of six catalytic PyrB chains organized as two trimers (C3), and six regulatory PyrI chains organized as three dimers (R2).

The enzyme catalyses carbamoyl phosphate + L-aspartate = N-carbamoyl-L-aspartate + phosphate + H(+). Its pathway is pyrimidine metabolism; UMP biosynthesis via de novo pathway; (S)-dihydroorotate from bicarbonate: step 2/3. In terms of biological role, catalyzes the condensation of carbamoyl phosphate and aspartate to form carbamoyl aspartate and inorganic phosphate, the committed step in the de novo pyrimidine nucleotide biosynthesis pathway. The chain is Aspartate carbamoyltransferase catalytic subunit from Roseobacter denitrificans (strain ATCC 33942 / OCh 114) (Erythrobacter sp. (strain OCh 114)).